A 138-amino-acid polypeptide reads, in one-letter code: Large ribosomal subunit protein uL11c (138 aa).

It belongs to the universal ribosomal protein uL11 family. As to quaternary structure, part of the ribosomal stalk of the 50S ribosomal subunit. Interacts with L10 and the large rRNA to form the base of the stalk. L10 forms an elongated spine to which L12 dimers bind in a sequential fashion forming a multimeric L10(L12)X complex.

It is found in the plastid. The protein resides in the chloroplast. Functionally, forms part of the ribosomal stalk which helps the ribosome interact with GTP-bound translation factors. In Cyanidioschyzon merolae (strain NIES-3377 / 10D) (Unicellular red alga), this protein is Large ribosomal subunit protein uL11c.